We begin with the raw amino-acid sequence, 353 residues long: Endophilin-A3 (353 aa).

A membrane-binding amphipathic helix region spans residues 1–21 (MSVAGLKKQFHKASQLFSEKI). The BAR domain maps to 18–249 (SEKISGAEGT…LQNRINVASS (232 aa)). The tract at residues 60 to 87 (PNPAYRAKLGMLNTMSKIRGQVKTTGYP) is required for dimerization upon membrane association. Positions 180 to 201 (DEEVKQAVEKFEESKELAERSM) form a coiled coil. Positions 218–254 (FVEAALDYHKQSTEILEDLQSKLQNRINVASSRPKRE) are interaction with ARC. The SH3 domain maps to 291–350 (VDQPCCQALYDFEPENEGELGFKEGDIITLTNQIDENWYEGMLNGESGFFPHNYVEVMVP).

Belongs to the endophilin family. As to quaternary structure, interacts with ARC. Interacts with SYNJ1 and DNM1. Highest level in a region associated with endocytosis of yolk proteins in developing oocytes (at protein level). Highest level in small ovarian follicles. High levels in brain and testis. Lower level in adrenal glands.

It localises to the cytoplasm. Its subcellular location is the early endosome membrane. Implicated in endocytosis. May recruit other proteins to membranes with high curvature. Implicated in endocytosis of yolk proteins during oogenesis. The chain is Endophilin-A3 from Gallus gallus (Chicken).